The chain runs to 462 residues: MEYRIERDTLGEIKVPADKLWAAQTQRSKENFPIGTEQMPLEIVKAFAILKKSAALSNQKLGKLSEEKAEAIVEAADEVIAGKWNEHFPLVVWQTGSGTQSNMNVNEVIANRGNQILKEKGSDVHIHPNDDVNMSQSSNDTFPTALHVACVIAVENHVLPAITKLKETLVEKVTAFEHIIKIGRTHLQDATPLTLGQEISGWHRMLEKTERMIAESNTYMKELAIGGTAVGTGINAHPKFGEMVSEEISQFTGKQFVSAPNKFHALTSHDEVVYTHGALKALAADLMKIANDVRWLASGPRSGLGEIIIPANEPGSSIMPGKVNPTQSEALTMVVAQVMGNDATIGFAASQGNFELNVFKPVIAYNFLQSAHLLADAIVSFNDNCAVGIEADEEVINENVNRSLMLVTALNPHIGYENAAKIAKHAHKEGLTLKEAALQSGLLTEEQFDEIVDPKKMIAPKE.

Substrate contacts are provided by residues 97–99, 127–130, 137–139, and T185; these read SGT, HPND, and SSN. H186 serves as the catalytic Proton donor/acceptor. Residue S316 is part of the active site. Residues S317 and 322-324 each bind substrate; that span reads KVN.

This sequence belongs to the class-II fumarase/aspartase family. Fumarase subfamily. Homotetramer.

The protein resides in the cytoplasm. It catalyses the reaction (S)-malate = fumarate + H2O. It participates in carbohydrate metabolism; tricarboxylic acid cycle; (S)-malate from fumarate: step 1/1. Its function is as follows. Involved in the TCA cycle. Catalyzes the stereospecific interconversion of fumarate to L-malate. This Bacillus cereus (strain ATCC 14579 / DSM 31 / CCUG 7414 / JCM 2152 / NBRC 15305 / NCIMB 9373 / NCTC 2599 / NRRL B-3711) protein is Fumarate hydratase class II.